A 140-amino-acid polypeptide reads, in one-letter code: MAAMTYHLDVVSAEKKMFSGVVQKIQVTGSEGELGIFPGHAPLLTAIKPGMIRIVKQFGEEEFIYLSGGILEVQPSVVIVLADTAIRGLDLDEARALESKRKAEAHINNSHGDVDYAQASAELAKAIAKLRVIELTKKAM.

The protein belongs to the ATPase epsilon chain family. As to quaternary structure, F-type ATPases have 2 components, CF(1) - the catalytic core - and CF(0) - the membrane proton channel. CF(1) has five subunits: alpha(3), beta(3), gamma(1), delta(1), epsilon(1). CF(0) has three main subunits: a, b and c.

The protein resides in the cell inner membrane. Produces ATP from ADP in the presence of a proton gradient across the membrane. This is ATP synthase epsilon chain from Yersinia pseudotuberculosis serotype O:1b (strain IP 31758).